The following is a 154-amino-acid chain: Transcriptional repressor NrdR (154 aa).

The segment at 3–34 is a zinc-finger region; that stretch reads CPFCNHGELKVIDSRNAPESNAIKRRRECLRC. An ATP-cone domain is found at 48 to 138; that stretch reads VQVLKRDGRY…VYRRFKDVGE (91 aa).

The protein belongs to the NrdR family. Zn(2+) serves as cofactor.

In terms of biological role, negatively regulates transcription of bacterial ribonucleotide reductase nrd genes and operons by binding to NrdR-boxes. The protein is Transcriptional repressor NrdR of Chlamydia trachomatis serovar L2 (strain ATCC VR-902B / DSM 19102 / 434/Bu).